Reading from the N-terminus, the 568-residue chain is MHAQDKGGVLPGLSLLLIAVAMVCPSQAAYKLQERYSWNQLDFAFPSARLKEQALASGDYIPTNALPVGVEHFGNRLFVTVPRWRDGIPATLTYINMDHSVTGSPELIPYPDWRANTAGDCSNSITTAYRIKVDECGRLWVLDTGTVGIGNTTTNPCPYAINIFDLTTNTRIRRYELPAADTNPNTFIANIAVDIGKNCDDAFAYFADELGYGLISYSWELNKSWRFSAHSYFFPDPLRGDFNVAGINFQWGEEGIFGMSLTPIRSDGYRTLYFSPLASHRQFAVSTRILRDETRTEDSYHDFVALDERGPNAHTTSRVMSDDGVELFNLIDQNAVGCWHSSMPYSPQFHGIVDRDDVGLVFPADVKIDENKNVWVLSDRMPVFLLSDLDYSDTNFRIYTAPLATLIENTVCDLRNNAYGPPNTVSIPKQAAPGHSAVGPPLYTTTNQYRPVLSQKPQTSWGPSPPSRNYLPALNGNPGIPGSLSKLNNLGAPGQVVSSVSVSTNTVGPSGIEVPKAYVFNQHNGLNYETSGPHLFPTLQPAPSQLGGGLKTYVNARQSGWWHHQQQG.

An N-terminal signal peptide occupies residues 1–28 (MHAQDKGGVLPGLSLLLIAVAMVCPSQA). 2 N-linked (GlcNAc...) asparagine glycosylation sites follow: Asn-151 and Asn-222.

Belongs to the major royal jelly protein family.

It is found in the secreted. Functionally, controls the pigmentation pattern of the adult cuticle and larval mouth parts. The chain is Protein yellow (y) from Drosophila guanche (Fruit fly).